The chain runs to 413 residues: cAMP-dependent protein kinase regulatory subunit (413 aa).

Residues 1–145 are disordered; the sequence is MADSSSFPGT…DSWTPPCHPK (145 aa). The dimerization and phosphorylation stretch occupies residues 24–161; the sequence is SPIQKISEEE…RLKTAVSNNF (138 aa). Residues 58–67 show a composition bias toward low complexity; sequence GNSFNGDNGS. Over residues 121–138 the composition is skewed to polar residues; it reads TSVSAESLNPTSAGSDSW. Serine 122 is modified (phosphoserine). Residues 162–291, glutamate 240, arginine 249, 294–413, glutamate 361, and arginine 370 each bind 3',5'-cyclic AMP; these read LFSH…FLEE and LLSS…PSPS.

This sequence belongs to the cAMP-dependent kinase regulatory chain family. Tetramer, composed of 2 regulatory (R) and 2 catalytic (C) subunits. In the presence of cAMP it dissociates into 2 active monomeric C subunits and an R dimer.

The sequence is that of cAMP-dependent protein kinase regulatory subunit (pkaR) from Aspergillus fumigatus (strain ATCC MYA-4609 / CBS 101355 / FGSC A1100 / Af293) (Neosartorya fumigata).